The primary structure comprises 551 residues: Probable NADH-ubiquinone oxidoreductase C3A11.07, mitochondrial (551 aa).

Residues 1-37 (MLFSRSILRGMPKAGIPKSPLALSASRNLRLANSVRF) constitute a mitochondrion transit peptide. 93-123 (TLVVLGAGWGATSILRTIDTSLFNVIVVSPR) provides a ligand contact to FAD. 255–291 (VHTVVVGGGPTGMEFAGEMADFIEDDLKSWYPELADD) provides a ligand contact to NAD(+).

Belongs to the NADH dehydrogenase family.

Its subcellular location is the mitochondrion. It catalyses the reaction a quinone + NADH + H(+) = a quinol + NAD(+). The enzyme catalyses a ubiquinone + NADH + H(+) = a ubiquinol + NAD(+). Its function is as follows. Catalyzes the oxidation of NADH. The chain is Probable NADH-ubiquinone oxidoreductase C3A11.07, mitochondrial from Schizosaccharomyces pombe (strain 972 / ATCC 24843) (Fission yeast).